The chain runs to 244 residues: Kallikrein-6 (244 aa).

The N-terminal stretch at 1–16 (MKKLMVVLSLIAAAWA) is a signal peptide. Positions 17-21 (EEQNK) are cleaved as a propeptide — activation peptide. Residues 22 to 242 (LVHGGPCDKT…YTNWIQKTIQ (221 aa)) enclose the Peptidase S1 domain. Cystine bridges form between C28–C157, C47–C63, C131–C231, C138–C203, C168–C182, and C193–C218. Catalysis depends on charge relay system residues H62 and D106. An N-linked (GlcNAc...) asparagine glycan is attached at N134. The Charge relay system role is filled by S197.

In terms of processing, inactivated by autolytic cleavage after Arg-80. In fluids, highest levels found in milk of lactating women followed by cerebrospinal fluid, nipple aspirate fluid and breast cyst fluid. Also found in serum, seminal plasma and some amniotic fluids and breast tumor cytosolic extracts. Not detected in urine. At the tissue level, highest concentrations found in glandular tissues such as salivary glands followed by lung, colon, fallopian tube, placenta, breast, pituitary and kidney. Not detected in skin, spleen, bone, thyroid, heart, ureter, liver, muscle, endometrium, testis, pancreas, seminal vesicle, ovary, adrenals and prostate. In brain, detected in gray matter neurons (at protein level). Colocalizes with pathological inclusions such as Lewy bodies and glial cytoplasmic inclusions. Overexpressed in primary breast tumors but not expressed in metastatic tumors.

Its subcellular location is the secreted. It is found in the nucleus. The protein localises to the nucleolus. It localises to the cytoplasm. The protein resides in the mitochondrion. Its subcellular location is the microsome. Inhibited by a range of serine protease inhibitors including soybean trypsin inhibitor, benzamidine and serpins. Activated by a range of glycosaminoglycans including chondroitin sulfate, dermatan sulfate, heparan sulfate and heparin. Its function is as follows. Serine protease which exhibits a preference for Arg over Lys in the substrate P1 position and for Ser or Pro in the P2 position. Shows activity against amyloid precursor protein, myelin basic protein, gelatin, casein and extracellular matrix proteins such as fibronectin, laminin, vitronectin and collagen. Degrades alpha-synuclein and prevents its polymerization, indicating that it may be involved in the pathogenesis of Parkinson disease and other synucleinopathies. May be involved in regulation of axon outgrowth following spinal cord injury. Tumor cells treated with a neutralizing KLK6 antibody migrate less than control cells, suggesting a role in invasion and metastasis. This is Kallikrein-6 (KLK6) from Homo sapiens (Human).